The chain runs to 125 residues: Succinate dehydrogenase assembly factor 3, mitochondrial (125 aa).

The transit peptide at 1 to 30 (MPGRHVSRVRALYKRVLQLHRVLPPDLKSL) directs the protein to the mitochondrion.

It belongs to the complex I LYR family. SDHAF3 subfamily. As to quaternary structure, interacts with SDHB within an SDHA-SDHB subcomplex.

The protein localises to the mitochondrion matrix. Its function is as follows. Plays an essential role in the assembly of succinate dehydrogenase (SDH), an enzyme complex (also referred to as respiratory complex II) that is a component of both the tricarboxylic acid (TCA) cycle and the mitochondrial electron transport chain, and which couples the oxidation of succinate to fumarate with the reduction of ubiquinone (coenzyme Q) to ubiquinol. Promotes maturation of the iron-sulfur protein subunit SDHB of the SDH catalytic dimer, protecting it from the deleterious effects of oxidants. May act together with SDHAF1. In Homo sapiens (Human), this protein is Succinate dehydrogenase assembly factor 3, mitochondrial.